Here is a 277-residue protein sequence, read N- to C-terminus: Uracil phosphoribosyltransferase homolog (277 aa).

The disordered stretch occupies residues 1–69 (MEAMPCHNQR…AAAPSPAAED (69 aa)). A compositionally biased stretch (low complexity) spans 37–69 (AEPSEGSSSGSPSPDSSSGSNGAAAAPSPAAED). Residues Arg-101, Arg-110, and 144 to 147 (EKGN) contribute to the GTP site. Arg-154 provides a ligand contact to 5-phospho-alpha-D-ribose 1-diphosphate. Positions 171 and 200 each coordinate GTP. 206–214 (YPILSTGNT) is a 5-phospho-alpha-D-ribose 1-diphosphate binding site. Residue 267–269 (THF) coordinates uracil.

It belongs to the UPRTase family.

It localises to the cytoplasm. It is found in the nucleus. The sequence is that of Uracil phosphoribosyltransferase homolog (UPRT) from Gallus gallus (Chicken).